The following is a 126-amino-acid chain: uncharacterized protein (126 aa).

The helical transmembrane segment at 3 to 23 (NMIVLIIFAAFIIYMIASYVY) threads the bilayer. The 85-residue stretch at 39–123 (GYRKAQLIDV…GFKKWGGKIK (85 aa)) folds into the Rhodanese domain.

The protein localises to the cell membrane. This is an uncharacterized protein from Bacillus subtilis (strain 168).